Reading from the N-terminus, the 76-residue chain is Gallerimycin (76 aa).

Positions 1-19 (MKIAFIVAISLAFLAVTSC) are cleaved as a signal peptide.

The protein belongs to the invertebrate defensin family.

In terms of biological role, has antifungal activity against the entomopathogenic fungus M.nisopliae, but does not display any antifungal activity against S.cerevisiae nor any antimicrobial activity against M.luteus, B.subtilis, and E.coli. The chain is Gallerimycin (LOC113523440) from Galleria mellonella (Greater wax moth).